A 145-amino-acid polypeptide reads, in one-letter code: Nucleoside diphosphate kinase (145 aa).

ATP contacts are provided by lysine 11, phenylalanine 59, arginine 87, threonine 93, arginine 104, and asparagine 114. The active-site Pros-phosphohistidine intermediate is the histidine 117.

Belongs to the NDK family. As to quaternary structure, homotetramer. It depends on Mg(2+) as a cofactor.

The protein localises to the cytoplasm. The catalysed reaction is a 2'-deoxyribonucleoside 5'-diphosphate + ATP = a 2'-deoxyribonucleoside 5'-triphosphate + ADP. It carries out the reaction a ribonucleoside 5'-diphosphate + ATP = a ribonucleoside 5'-triphosphate + ADP. Its function is as follows. Major role in the synthesis of nucleoside triphosphates other than ATP. The ATP gamma phosphate is transferred to the NDP beta phosphate via a ping-pong mechanism, using a phosphorylated active-site intermediate. This Myxococcus xanthus protein is Nucleoside diphosphate kinase.